The chain runs to 167 residues: Large ribosomal subunit protein uL10 (167 aa).

This sequence belongs to the universal ribosomal protein uL10 family. In terms of assembly, part of the ribosomal stalk of the 50S ribosomal subunit. The N-terminus interacts with L11 and the large rRNA to form the base of the stalk. The C-terminus forms an elongated spine to which L12 dimers bind in a sequential fashion forming a multimeric L10(L12)X complex.

In terms of biological role, forms part of the ribosomal stalk, playing a central role in the interaction of the ribosome with GTP-bound translation factors. The sequence is that of Large ribosomal subunit protein uL10 from Erwinia tasmaniensis (strain DSM 17950 / CFBP 7177 / CIP 109463 / NCPPB 4357 / Et1/99).